We begin with the raw amino-acid sequence, 258 residues long: Imidazole glycerol phosphate synthase subunit HisF (258 aa).

Active-site residues include aspartate 11 and aspartate 130.

The protein belongs to the HisA/HisF family. As to quaternary structure, heterodimer of HisH and HisF.

It is found in the cytoplasm. It catalyses the reaction 5-[(5-phospho-1-deoxy-D-ribulos-1-ylimino)methylamino]-1-(5-phospho-beta-D-ribosyl)imidazole-4-carboxamide + L-glutamine = D-erythro-1-(imidazol-4-yl)glycerol 3-phosphate + 5-amino-1-(5-phospho-beta-D-ribosyl)imidazole-4-carboxamide + L-glutamate + H(+). It functions in the pathway amino-acid biosynthesis; L-histidine biosynthesis; L-histidine from 5-phospho-alpha-D-ribose 1-diphosphate: step 5/9. IGPS catalyzes the conversion of PRFAR and glutamine to IGP, AICAR and glutamate. The HisF subunit catalyzes the cyclization activity that produces IGP and AICAR from PRFAR using the ammonia provided by the HisH subunit. This chain is Imidazole glycerol phosphate synthase subunit HisF, found in Blochmanniella floridana.